The sequence spans 151 residues: Lectin-like protein BA14k (151 aa).

Residues 1–26 (MNIFKQTCVGAFAVIFGATSIAPTMA) form the signal peptide. A helical transmembrane segment spans residues 83–103 (GWWYPLAAFGAGAIIGGAVSQ).

This sequence belongs to the BA14k family.

Its subcellular location is the cell membrane. Its function is as follows. Has immunoglobulin-binding and hemagglutination properties, and can bind to mannose. Essential for virulence. May be involved in LPS biosynthesis or polysaccharide transport. The chain is Lectin-like protein BA14k from Brucella anthropi (strain ATCC 49188 / DSM 6882 / CCUG 24695 / JCM 21032 / LMG 3331 / NBRC 15819 / NCTC 12168 / Alc 37) (Ochrobactrum anthropi).